The following is a 351-amino-acid chain: Nicotinate-nucleotide--dimethylbenzimidazole phosphoribosyltransferase (351 aa).

The active-site Proton acceptor is the E317.

The protein belongs to the CobT family.

The catalysed reaction is 5,6-dimethylbenzimidazole + nicotinate beta-D-ribonucleotide = alpha-ribazole 5'-phosphate + nicotinate + H(+). Its pathway is nucleoside biosynthesis; alpha-ribazole biosynthesis; alpha-ribazole from 5,6-dimethylbenzimidazole: step 1/2. Functionally, catalyzes the synthesis of alpha-ribazole-5'-phosphate from nicotinate mononucleotide (NAMN) and 5,6-dimethylbenzimidazole (DMB). The sequence is that of Nicotinate-nucleotide--dimethylbenzimidazole phosphoribosyltransferase from Ectopseudomonas mendocina (strain ymp) (Pseudomonas mendocina).